We begin with the raw amino-acid sequence, 206 residues long: MNKPIYFSKFLVTEQVFYKSKYTYALVNLKPIVPGHVLIVPLRTTVLNLSDLTMPESQDYFKTLQLIHRFIKWQYKADSINVAIQDGPEAGQSVPHLHTHIIPRYKINNVGDLIYDKLDHWDGNGTLTDWQGRRDEYLGVGGRQARKNNSTSATVDGDELSQGPNVLKPDSQRKVRALTEMKKEAEDLQARLEEFVSSDPGLTQWL.

The HIT domain maps to lysine 3 to tyrosine 115. Positions histidine 96 to histidine 100 match the Histidine triad motif motif. The Tele-AMP-histidine intermediate role is filled by histidine 98. Positions arginine 143–proline 164 are disordered.

In terms of assembly, homodimer. Requires Mn(2+) as cofactor.

The protein localises to the cytoplasm. The protein resides in the nucleus. Its subcellular location is the mitochondrion. The enzyme catalyses P(1),P(3)-bis(5'-adenosyl) triphosphate + H2O = AMP + ADP + 2 H(+). In terms of biological role, cleaves A-5'-PPP-5'A to yield AMP and ADP. Can cleave all dinucleoside polyphosphates, provided the phosphate chain contains at least 3 phosphates and that 1 of the 2 bases composing the nucleotide is a purine. Is most effective on dinucleoside triphosphates. Negatively regulates intracellular dinucleoside polyphosphate levels, which elevate following heat shock. The chain is Bis(5'-adenosyl)-triphosphatase (HNT2) from Saccharomyces cerevisiae (strain RM11-1a) (Baker's yeast).